The chain runs to 149 residues: D-aminoacyl-tRNA deacylase (149 aa).

A Gly-cisPro motif, important for rejection of L-amino acids motif is present at residues 141-142 (GP).

Belongs to the DTD family. In terms of assembly, homodimer.

Its subcellular location is the cytoplasm. It carries out the reaction glycyl-tRNA(Ala) + H2O = tRNA(Ala) + glycine + H(+). It catalyses the reaction a D-aminoacyl-tRNA + H2O = a tRNA + a D-alpha-amino acid + H(+). Its function is as follows. An aminoacyl-tRNA editing enzyme that deacylates mischarged D-aminoacyl-tRNAs. Also deacylates mischarged glycyl-tRNA(Ala), protecting cells against glycine mischarging by AlaRS. Acts via tRNA-based rather than protein-based catalysis; rejects L-amino acids rather than detecting D-amino acids in the active site. By recycling D-aminoacyl-tRNA to D-amino acids and free tRNA molecules, this enzyme counteracts the toxicity associated with the formation of D-aminoacyl-tRNA entities in vivo and helps enforce protein L-homochirality. The protein is D-aminoacyl-tRNA deacylase of Hydrogenovibrio crunogenus (strain DSM 25203 / XCL-2) (Thiomicrospira crunogena).